Here is a 226-residue protein sequence, read N- to C-terminus: 2-dehydro-3-deoxy-phosphogluconate aldolase (226 aa).

Glutamate 57 functions as the Proton acceptor in the catalytic mechanism. Residues arginine 61, threonine 85, and lysine 145 each coordinate pyruvate. Catalysis depends on lysine 145, which acts as the Schiff-base intermediate with substrate.

The protein belongs to the KHG/KDPG aldolase family. Homotrimer.

The catalysed reaction is 2-dehydro-3-deoxy-6-phospho-D-gluconate = D-glyceraldehyde 3-phosphate + pyruvate. The protein operates within carbohydrate acid metabolism; 2-dehydro-3-deoxy-D-gluconate degradation; D-glyceraldehyde 3-phosphate and pyruvate from 2-dehydro-3-deoxy-D-gluconate: step 2/2. Involved in the degradation of glucose via the Entner-Doudoroff pathway. Catalyzes the reversible, stereospecific retro-aldol cleavage of 2-keto-3-deoxy-6-phosphogluconate (KDPG) to pyruvate and D-glyceraldehyde-3-phosphate. This Pseudomonas putida (Arthrobacter siderocapsulatus) protein is 2-dehydro-3-deoxy-phosphogluconate aldolase.